The primary structure comprises 140 residues: Probable transport accessory protein MmpS4 (140 aa).

Residues 2 to 22 (LMRTWIPLVILVVVIVGGFTV) form a helical membrane-spanning segment.

It belongs to the MmpS family.

The protein resides in the cell membrane. In Mycobacterium bovis (strain ATCC BAA-935 / AF2122/97), this protein is Probable transport accessory protein MmpS4 (mmpS4).